The chain runs to 65 residues: Putative primary metabolism protein prl65 (65 aa).

Residues 1–25 (MTKYSKGNKVEYHPIGGPSGTSTST) form a disordered region.

Its function is as follows. May play a role in primary metabolism. This chain is Putative primary metabolism protein prl65, found in Schizosaccharomyces pombe (strain 972 / ATCC 24843) (Fission yeast).